The following is a 497-amino-acid chain: Probable malate:quinone oxidoreductase (497 aa).

It belongs to the MQO family. FAD is required as a cofactor.

It catalyses the reaction (S)-malate + a quinone = a quinol + oxaloacetate. It functions in the pathway carbohydrate metabolism; tricarboxylic acid cycle; oxaloacetate from (S)-malate (quinone route): step 1/1. The polypeptide is Probable malate:quinone oxidoreductase (Tolumonas auensis (strain DSM 9187 / NBRC 110442 / TA 4)).